A 228-amino-acid chain; its full sequence is Protein GlxC (228 aa).

Belongs to the FwdC/FmdC family.

In Rhizobium meliloti (strain 1021) (Ensifer meliloti), this protein is Protein GlxC (glxC).